A 280-amino-acid chain; its full sequence is Ribonuclease P protein subunit p38 (280 aa).

Alanine 2 carries the post-translational modification N-acetylalanine. 3 positions are modified to phosphoserine: serine 12, serine 221, and serine 230. Residues 202–227 are disordered; that stretch reads WLPDRTQGPTDSLETEPSESQDNEIL. The span at 214–226 shows a compositional bias: acidic residues; it reads LETEPSESQDNEI. Residues 254-280 form a disordered region; the sequence is QPLKIKKLIPNPSKIRKPPKSKKSISK. Over residues 267 to 280 the composition is skewed to basic residues; that stretch reads KIRKPPKSKKSISK.

This sequence belongs to the eukaryotic ribosomal protein eL8 family. Component of nuclear RNase P and RNase MRP ribonucleoproteins. RNase P consists of a catalytic RNA moiety and about 10 protein subunits; POP1, POP4, POP5, POP7, RPP14, RPP21, RPP25, RPP30, RPP38 and RPP40. Within the RNase P complex, POP1, POP7 and RPP25 form the 'finger' subcomplex, POP5, RPP14, RPP40 and homodimeric RPP30 form the 'palm' subcomplex, and RPP21, POP4 and RPP38 form the 'wrist' subcomplex. All subunits of the RNase P complex interact with the catalytic RNA. Several subunits of RNase P are also part of the RNase MRP complex. RNase MRP consists of a catalytic RNA moiety and about 8 protein subunits; POP1, POP7, RPP25, RPP30, RPP38, RPP40 and possibly also POP4 and POP5.

The protein localises to the nucleus. It localises to the nucleolus. In terms of biological role, component of ribonuclease P, a ribonucleoprotein complex that generates mature tRNA molecules by cleaving their 5'-ends. Also a component of the MRP ribonuclease complex, which cleaves pre-rRNA sequences. The chain is Ribonuclease P protein subunit p38 (Rpp38) from Mus musculus (Mouse).